A 198-amino-acid polypeptide reads, in one-letter code: Holliday junction branch migration complex subunit RuvA (198 aa).

Residues 1–63 (MYDYIKGQLT…EDAHLLFGFH (63 aa)) are domain I. A domain II region spans residues 64-142 (TEDEKDVFLK…EAPQETGHTK (79 aa)). The segment at 143–147 (ARSNK) is flexible linker. The segment at 148 to 198 (AGNTQLDEAIEALLALGYKAKELKKIRAFFEETSETAEQYIKSALKLLMKG) is domain III.

Belongs to the RuvA family. In terms of assembly, homotetramer. Forms an RuvA(8)-RuvB(12)-Holliday junction (HJ) complex. HJ DNA is sandwiched between 2 RuvA tetramers; dsDNA enters through RuvA and exits via RuvB. An RuvB hexamer assembles on each DNA strand where it exits the tetramer. Each RuvB hexamer is contacted by two RuvA subunits (via domain III) on 2 adjacent RuvB subunits; this complex drives branch migration. In the full resolvosome a probable DNA-RuvA(4)-RuvB(12)-RuvC(2) complex forms which resolves the HJ.

The protein localises to the cytoplasm. Its function is as follows. The RuvA-RuvB-RuvC complex processes Holliday junction (HJ) DNA during genetic recombination and DNA repair, while the RuvA-RuvB complex plays an important role in the rescue of blocked DNA replication forks via replication fork reversal (RFR). RuvA specifically binds to HJ cruciform DNA, conferring on it an open structure. The RuvB hexamer acts as an ATP-dependent pump, pulling dsDNA into and through the RuvAB complex. HJ branch migration allows RuvC to scan DNA until it finds its consensus sequence, where it cleaves and resolves the cruciform DNA. The protein is Holliday junction branch migration complex subunit RuvA of Streptococcus pyogenes serotype M2 (strain MGAS10270).